The chain runs to 138 residues: Transcription antitermination protein NusB (138 aa).

This sequence belongs to the NusB family.

Functionally, involved in transcription antitermination. Required for transcription of ribosomal RNA (rRNA) genes. Binds specifically to the boxA antiterminator sequence of the ribosomal RNA (rrn) operons. The sequence is that of Transcription antitermination protein NusB from Helicobacter pylori (strain G27).